The following is a 426-amino-acid chain: Serine--tRNA ligase (426 aa).

233–235 is an L-serine binding site; that stretch reads TSE. 264-266 lines the ATP pocket; it reads RAE. Residue Glu-287 participates in L-serine binding. 351–354 serves as a coordination point for ATP; that stretch reads EISS. Ser-387 is an L-serine binding site.

Belongs to the class-II aminoacyl-tRNA synthetase family. Type-1 seryl-tRNA synthetase subfamily. As to quaternary structure, homodimer. The tRNA molecule binds across the dimer.

Its subcellular location is the cytoplasm. The enzyme catalyses tRNA(Ser) + L-serine + ATP = L-seryl-tRNA(Ser) + AMP + diphosphate + H(+). The catalysed reaction is tRNA(Sec) + L-serine + ATP = L-seryl-tRNA(Sec) + AMP + diphosphate + H(+). It participates in aminoacyl-tRNA biosynthesis; selenocysteinyl-tRNA(Sec) biosynthesis; L-seryl-tRNA(Sec) from L-serine and tRNA(Sec): step 1/1. Catalyzes the attachment of serine to tRNA(Ser). Is also able to aminoacylate tRNA(Sec) with serine, to form the misacylated tRNA L-seryl-tRNA(Sec), which will be further converted into selenocysteinyl-tRNA(Sec). The chain is Serine--tRNA ligase from Stenotrophomonas maltophilia (strain K279a).